The primary structure comprises 1123 residues: Probable serine/threonine-protein kinase nek3 (1123 aa).

A Protein kinase domain is found at 4 to 264; the sequence is YEEIKTIGKG…VNDILELPFI (261 aa). ATP-binding positions include 10 to 18 and Lys33; that span reads IGKGSFGRA. Asp130 functions as the Proton acceptor in the catalytic mechanism. 2 stretches are compositionally biased toward low complexity: residues 283–307 and 327–415; these read NNDS…ISSS and NNNN…TSLK. Disordered stretches follow at residues 283–310, 325–415, 440–802, 866–887, 908–937, and 990–1020; these read NNDS…STEV, NINN…TSLK, SKTP…TNSQ, SAST…TNTM, SVKL…SITD, and SLNN…NQNN. Residues 440-459 show a composition bias toward polar residues; that stretch reads SKTPISGTKNPTTSKITPSI. Composition is skewed to low complexity over residues 478–529, 557–576, 588–617, and 642–653; these read SKPT…SSSV, SNLS…SNSQ, SPTS…SLKS, and NGNSNVNSTVLN. The span at 654–665 shows a compositional bias: polar residues; sequence RSVSSLSIQHKP. Low complexity-rich tracts occupy residues 666–696, 712–738, and 752–802; these read TNSG…TSTT, STPT…TPST, and SSNG…TNSQ. The segment covering 908 to 935 has biased composition (low complexity); that stretch reads SVKLSSKSSSPIKTSSSSSSSSSSSSSI.

This sequence belongs to the protein kinase superfamily. NEK Ser/Thr protein kinase family. NIMA subfamily.

It carries out the reaction L-seryl-[protein] + ATP = O-phospho-L-seryl-[protein] + ADP + H(+). The enzyme catalyses L-threonyl-[protein] + ATP = O-phospho-L-threonyl-[protein] + ADP + H(+). The chain is Probable serine/threonine-protein kinase nek3 (nek3) from Dictyostelium discoideum (Social amoeba).